The sequence spans 413 residues: Phosphopentomutase (413 aa).

Positions 11, 306, 311, 347, 348, and 359 each coordinate Mn(2+).

The protein belongs to the phosphopentomutase family. Mn(2+) serves as cofactor.

Its subcellular location is the cytoplasm. It carries out the reaction 2-deoxy-alpha-D-ribose 1-phosphate = 2-deoxy-D-ribose 5-phosphate. It catalyses the reaction alpha-D-ribose 1-phosphate = D-ribose 5-phosphate. It functions in the pathway carbohydrate degradation; 2-deoxy-D-ribose 1-phosphate degradation; D-glyceraldehyde 3-phosphate and acetaldehyde from 2-deoxy-alpha-D-ribose 1-phosphate: step 1/2. Isomerase that catalyzes the conversion of deoxy-ribose 1-phosphate (dRib-1-P) and ribose 1-phosphate (Rib-1-P) to deoxy-ribose 5-phosphate (dRib-5-P) and ribose 5-phosphate (Rib-5-P), respectively. This Helicobacter pylori (strain Shi470) protein is Phosphopentomutase.